A 428-amino-acid chain; its full sequence is MEETSVAGDPGPDAGTSTAPNAAPEPVARRQRILFVGEAATLAHVVRPFVLARSLDPSRYEVHFACDPRFNKLLGPLPFPHHPIHTVPSEEVLLKIAQGRLFYNTRTLRKYIAADRKILNEIAPDVVVGDNRLSLSVSARLAGIPYIAIANAYWSPQARRRFPLPDVPWTRFFGVRPVSILYRLYRPLIFALYCLPLNWLRRKHGLSSLGWDLCRIFTDGDYTLYADVPELVPTYNLPANHRYLGPVLWSPDVKPPTWWHSLPTDRPIIYATLGSSGGKNLLQVVLNALADLPVTVIAATAGRNHLKNVPANAFVADYLPGEAAAARSAVVLCNGGSPTTQQALAAGVPVIGLPSNMDQHLNMEALERAGAGVLLRTERLNTEGVAAAVKQVLSGAEFRQAARRLAEAFGPDFAGFPQHIESALRLVC.

Residues 1–23 (MEETSVAGDPGPDAGTSTAPNAA) form a disordered region.

This sequence belongs to the UDP-glycosyltransferase family.

In terms of biological role, involved in glycosylation steps downstream of mono-O-methyl-glycosyl-p-hydroxybenzoic acid derivative (p-HBAD I) and 2-O-methyl-rhamnosyl-phenolphthiocerol dimycocerosate (mycoside B) during the p-hydroxybenzoic acid derivatives (p-HBAD) and glycosylated phenolphthiocerol dimycocerosates (PGL) biosynthesis. This chain is PGL/p-HBAD biosynthesis glycosyltransferase MRA_2985, found in Mycobacterium tuberculosis (strain ATCC 25177 / H37Ra).